The primary structure comprises 318 residues: Ubiquinol oxidase, mitochondrial (318 aa).

A mitochondrion-targeting transit peptide spans 1–46 (MTVMRGLLNGGRYGNRYIWTAISLRHPEVMEGNGLESAVMQWRRML). Residues 143-163 (AMMLETVAAVPGMVGGMLLHL) traverse the membrane as a helical segment. Fe cation is bound by residues Glu147, Glu186, and His189. The chain crosses the membrane as a helical span at residues 205 to 225 (LLVLAVQGVFFNSFFVLYVLS). Residues Glu237, Glu288, and His291 each coordinate Fe cation.

The protein belongs to the alternative oxidase family. In terms of assembly, homodimer; disulfide-linked. The cofactor is Fe cation.

It is found in the mitochondrion inner membrane. It catalyses the reaction 2 a ubiquinol + O2 = 2 a ubiquinone + 2 H2O. Its function is as follows. Catalyzes the cyanide-resistant oxidation of ubiquinol and the reduction of molecular oxygen to water, but does not translocate protons and consequently is not linked to oxidative phosphorylation. May increase respiration when the cytochrome respiratory pathway is restricted, or in response to low temperatures. The protein is Ubiquinol oxidase, mitochondrial (AOMI 1) of Mangifera indica (Mango).